Here is a 74-residue protein sequence, read N- to C-terminus: Sec-independent protein translocase protein TatA (74 aa).

A helical transmembrane segment spans residues 1–21; it reads MGSFSIWHWLIVLLIVVLVFG.

This sequence belongs to the TatA/E family. As to quaternary structure, the Tat system comprises two distinct complexes: a TatABC complex, containing multiple copies of TatA, TatB and TatC subunits, and a separate TatA complex, containing only TatA subunits. Substrates initially bind to the TatABC complex, which probably triggers association of the separate TatA complex to form the active translocon.

It localises to the cell inner membrane. Functionally, part of the twin-arginine translocation (Tat) system that transports large folded proteins containing a characteristic twin-arginine motif in their signal peptide across membranes. TatA could form the protein-conducting channel of the Tat system. The polypeptide is Sec-independent protein translocase protein TatA (Nitrosospira multiformis (strain ATCC 25196 / NCIMB 11849 / C 71)).